The sequence spans 517 residues: MQLNPAEISELIKSRIEGLGASSDIRNQGTVVSVTDGIVRVHGLSEVMAGEMLEFPATKDGQPTFGLALNLERDSVGAVILGEYEHISEGDTVKCTGRILEVPVGPELIGRVVNALGQPIDGKGPINAKMTDVIEKVAPGVIARKSVDQPVQTGLKSIDSMVPVGRGQRELIIGDRQTGKTAVAIDAIINQKGQNMTCVYVAIGQKASSIKNVVRSLEAAGAMSYTIVVAASASESAAMQYVSAYSGCTMGEYFRDRGEDALIIYDDLSKQAVAYRQVSLLLRRPPGREAYPGDVFYLHSRLLERAARVNADYVEKFTNGAVKGKTGSLTALPIIETQAGDVSAFVPTNVISITDGQIFLETNLFNAGIRPAINAGISVSRVGGAAQTKLVKGLSGGIRTDLAQYRELAAFAQFASDLDDATRKQLDRGARVTELLKQQQYQPLPISLMAATLYSVNKGFLDDVDVKKVLAFESGLHQFLKTSYAALLKKLEDSKALDKDSEAELAAAIGAFKKSFA.

174–181 serves as a coordination point for ATP; that stretch reads GDRQTGKT.

It belongs to the ATPase alpha/beta chains family. As to quaternary structure, F-type ATPases have 2 components, CF(1) - the catalytic core - and CF(0) - the membrane proton channel. CF(1) has five subunits: alpha(3), beta(3), gamma(1), delta(1), epsilon(1). CF(0) has four main subunits: a(1), b(1), b'(1) and c(9-12).

The protein localises to the cell inner membrane. It carries out the reaction ATP + H2O + 4 H(+)(in) = ADP + phosphate + 5 H(+)(out). In terms of biological role, produces ATP from ADP in the presence of a proton gradient across the membrane. The alpha chain is a regulatory subunit. In Methylibium petroleiphilum (strain ATCC BAA-1232 / LMG 22953 / PM1), this protein is ATP synthase subunit alpha.